The chain runs to 236 residues: MAATLLDVCAVVPAAGFGRRMQTECPKQYLSIGNKTILEHSVHALLAHPRVTRVVIAISPGDHRFAQLPLANHPQITVVDGGNERADSVLAGLQAVAEAQWVLVHDAARPCLHQDDLARLLAISENSRVGGILASPVRDTMKRGEPGKNAIAHTVERADLWHALTPQFFPRELLHDCLTRALNEGATITDEASALEYCGFHPVLVEGRADNIKVTRPEDLALAEFYLTRTIHQEKA.

The protein belongs to the IspD/TarI cytidylyltransferase family. IspD subfamily. As to quaternary structure, homodimer.

It carries out the reaction 2-C-methyl-D-erythritol 4-phosphate + CTP + H(+) = 4-CDP-2-C-methyl-D-erythritol + diphosphate. It functions in the pathway isoprenoid biosynthesis; isopentenyl diphosphate biosynthesis via DXP pathway; isopentenyl diphosphate from 1-deoxy-D-xylulose 5-phosphate: step 2/6. Its function is as follows. Catalyzes the formation of 4-diphosphocytidyl-2-C-methyl-D-erythritol from CTP and 2-C-methyl-D-erythritol 4-phosphate (MEP). The protein is 2-C-methyl-D-erythritol 4-phosphate cytidylyltransferase of Salmonella paratyphi C (strain RKS4594).